Consider the following 177-residue polypeptide: MAHPVQSEFPSAQEPGSAAFLDLPEMEILLTKAENKDDKTLNLSKTLSGPLDLEQNSQGLPFKAISEGHLEAPLPRSPSRASSRRASSIATTSYAQDQEAPRDYLILAVVACFCPVWPLNLIPLIISIMSRSSMQQGNVDGARRLGRLARLLSITLIIMGIVIIMVAVTVNFTVQKK.

The Cytoplasmic segment spans residues 1-105 (MAHPVQSEFP…QDQEAPRDYL (105 aa)). Phosphoserine is present on residues Ser-48, Ser-87, and Ser-88. The disordered stretch occupies residues 71-92 (EAPLPRSPSRASSRRASSIATT). Residues 72–88 (APLPRSPSRASSRRASS) are compositionally biased toward low complexity. An intramembrane region (helical) is located at residues 106 to 126 (ILAVVACFCPVWPLNLIPLII). The Cytoplasmic portion of the chain corresponds to 127-153 (SIMSRSSMQQGNVDGARRLGRLARLLS). Residues 154-174 (ITLIIMGIVIIMVAVTVNFTV) traverse the membrane as a helical segment. Over 175–177 (QKK) the chain is Extracellular.

This sequence belongs to the CD225/Dispanin family. As to quaternary structure, interacts with SLC2A4; the interaction is required for proper SLC2A4 reacycling after insulin stimulation. As to expression, expressed at high levels in heart, mammary gland, adrenal gland, stomach, smooth muscle and skeletal muscle, and at lower levels in brain and lung. Strongly down-regulated in lung cancer tissues, due to hypermethylation of the corresponding locus. Expressed in adipose tissue.

The protein resides in the cell membrane. It is found in the endomembrane system. It localises to the cytoplasm. Its subcellular location is the perinuclear region. In terms of biological role, regulates insulin-mediated adipose tissue glucose uptake and transport by modulation of SLC2A4 recycling. Not required for SLC2A4 membrane fusion upon an initial stimulus, but rather is necessary for proper protein recycling during prolonged insulin stimulation. The sequence is that of Trafficking regulator of GLUT4 1 from Homo sapiens (Human).